Reading from the N-terminus, the 642-residue chain is Arginine--tRNA ligase (642 aa).

The 'HIGH' region motif lies at 133–143; sequence VNPTKPLHMGH.

It belongs to the class-I aminoacyl-tRNA synthetase family.

The protein resides in the cytoplasm. It catalyses the reaction tRNA(Arg) + L-arginine + ATP = L-arginyl-tRNA(Arg) + AMP + diphosphate. In Thermococcus kodakarensis (strain ATCC BAA-918 / JCM 12380 / KOD1) (Pyrococcus kodakaraensis (strain KOD1)), this protein is Arginine--tRNA ligase.